The chain runs to 336 residues: tRNA(Ile)-lysidine synthase (336 aa).

40 to 45 (SGGQDS) lines the ATP pocket.

The protein belongs to the tRNA(Ile)-lysidine synthase family.

The protein resides in the cytoplasm. It carries out the reaction cytidine(34) in tRNA(Ile2) + L-lysine + ATP = lysidine(34) in tRNA(Ile2) + AMP + diphosphate + H(+). Its function is as follows. Ligates lysine onto the cytidine present at position 34 of the AUA codon-specific tRNA(Ile) that contains the anticodon CAU, in an ATP-dependent manner. Cytidine is converted to lysidine, thus changing the amino acid specificity of the tRNA from methionine to isoleucine. This is tRNA(Ile)-lysidine synthase from Prochlorococcus marinus subsp. pastoris (strain CCMP1986 / NIES-2087 / MED4).